A 143-amino-acid polypeptide reads, in one-letter code: Small ribosomal subunit protein uS11c (143 aa).

Belongs to the universal ribosomal protein uS11 family. In terms of assembly, part of the 30S ribosomal subunit.

The protein resides in the plastid. It localises to the chloroplast. This chain is Small ribosomal subunit protein uS11c, found in Saccharum officinarum (Sugarcane).